The sequence spans 209 residues: Uracil phosphoribosyltransferase (209 aa).

5-phospho-alpha-D-ribose 1-diphosphate-binding positions include R79, R104, and 131–139 (DPMLATGGS). Uracil is bound by residues I194 and 199–201 (GDA). D200 provides a ligand contact to 5-phospho-alpha-D-ribose 1-diphosphate.

The protein belongs to the UPRTase family. It depends on Mg(2+) as a cofactor.

The catalysed reaction is UMP + diphosphate = 5-phospho-alpha-D-ribose 1-diphosphate + uracil. It participates in pyrimidine metabolism; UMP biosynthesis via salvage pathway; UMP from uracil: step 1/1. Its activity is regulated as follows. Allosterically activated by GTP. Its function is as follows. Catalyzes the conversion of uracil and 5-phospho-alpha-D-ribose 1-diphosphate (PRPP) to UMP and diphosphate. The chain is Uracil phosphoribosyltransferase from Agathobacter rectalis (strain ATCC 33656 / DSM 3377 / JCM 17463 / KCTC 5835 / VPI 0990) (Eubacterium rectale).